Consider the following 204-residue polypeptide: High frequency lysogenization protein HflD homolog (204 aa).

It belongs to the HflD family.

It localises to the cytoplasm. The protein resides in the cell inner membrane. This Xanthomonas campestris pv. campestris (strain ATCC 33913 / DSM 3586 / NCPPB 528 / LMG 568 / P 25) protein is High frequency lysogenization protein HflD homolog.